Consider the following 81-residue polypeptide: UPF0410 protein YwzA (81 aa).

Helical transmembrane passes span 1–21, 27–47, and 56–76; these read MSFL…SLFV, GGII…HGLL, and GFAI…VSLL.

Belongs to the UPF0410 family.

It localises to the cell membrane. The chain is UPF0410 protein YwzA (ywzA) from Bacillus subtilis (strain 168).